The sequence spans 446 residues: Coiled-coil domain-containing protein 112 (446 aa).

2 coiled-coil regions span residues 23 to 116 (LEEL…RKID) and 219 to 400 (ERKK…NVSR). 2 disordered regions span residues 247–277 (NNTP…AVEA) and 394–430 (VENN…LLHI). Basic and acidic residues predominate over residues 255–268 (NKPEDNQKQKEEQR).

It is found in the cytoplasm. Its subcellular location is the cytoskeleton. The protein localises to the microtubule organizing center. The protein resides in the centrosome. It localises to the centriolar satellite. In Macaca fascicularis (Crab-eating macaque), this protein is Coiled-coil domain-containing protein 112 (CCDC112).